We begin with the raw amino-acid sequence, 242 residues long: MTCCIDQDSLGQTFQDAIDILIQQSAGESQYSSENRNYMAIINPYPHVRGNANYYGMSPTENPLYDWRGVTNGSADLYLEGGFHQSVQNIAESQLVQPPFFQQKGGRGRRKLRLFEYLFESLCNSEMVSCIQWVDKARGIFQFISKNKETLAELWGQRKGNRKPMTYQKMARALRNYARTGEIIKIRRKLTYQFSEAVLQRLAPANYLGKDLFYPQYGQPDQGYLSLNHWNANHYAHGSYQS.

The segment at residues 112-195 (LRLFEYLFES…IRRKLTYQFS (84 aa)) is a DNA-binding region (ETS).

It belongs to the ETS family. In terms of assembly, binds DNA as a monomer. Expressed in lymphoid tissues, including spleen, bone marrow and thymus. According to PubMed:19037245, highly expressed in red pulp macrophages and, at lower, levels in B-cells, but not in other cells, including, monocytes, dendritic cells and other tissue macrophages. According to PubMed:10464163 expressed in pre- and mature B-cells but not in immature B-cells; according to PubMed:10187812 not expressed in pre- but predominantly in mature B-cells and at lower levels in macrophages.

The protein localises to the nucleus. Functionally, controls the development of red pulp macrophages required for red blood cells recycling and iron homeostasis. Transcription factor that binds to the PU-box, a purine-rich DNA sequence (5'-GAGGA[AT]-3') that can act as a lymphoid-specific enhancer. Regulates VCAM1 gene expression. The chain is Transcription factor Spi-C (Spic) from Mus musculus (Mouse).